Reading from the N-terminus, the 416-residue chain is Serine hydroxymethyltransferase (416 aa).

Residues Leu-118 and 122-124 (GHL) each bind (6S)-5,6,7,8-tetrahydrofolate. Lys-226 bears the N6-(pyridoxal phosphate)lysine mark. (6S)-5,6,7,8-tetrahydrofolate-binding positions include Glu-242 and 350 to 352 (SPF).

This sequence belongs to the SHMT family. Homodimer. It depends on pyridoxal 5'-phosphate as a cofactor.

It localises to the cytoplasm. The catalysed reaction is (6R)-5,10-methylene-5,6,7,8-tetrahydrofolate + glycine + H2O = (6S)-5,6,7,8-tetrahydrofolate + L-serine. The protein operates within one-carbon metabolism; tetrahydrofolate interconversion. It participates in amino-acid biosynthesis; glycine biosynthesis; glycine from L-serine: step 1/1. In terms of biological role, catalyzes the reversible interconversion of serine and glycine with tetrahydrofolate (THF) serving as the one-carbon carrier. This reaction serves as the major source of one-carbon groups required for the biosynthesis of purines, thymidylate, methionine, and other important biomolecules. Also exhibits THF-independent aldolase activity toward beta-hydroxyamino acids, producing glycine and aldehydes, via a retro-aldol mechanism. The sequence is that of Serine hydroxymethyltransferase from Helicobacter pylori (strain ATCC 700392 / 26695) (Campylobacter pylori).